The primary structure comprises 49 residues: Isoflavone reductase homolog 2 (49 aa).

An NADP(+)-binding site is contributed by 5-11; that stretch reads GGTGYIG.

The protein belongs to the NmrA-type oxidoreductase family. Isoflavone reductase subfamily.

It is found in the cytoplasm. The sequence is that of Isoflavone reductase homolog 2 from Pseudotsuga menziesii (Douglas-fir).